The chain runs to 689 residues: Elongation factor G (689 aa).

The tr-type G domain maps to 8–282; sequence ENTRNLGIMA…AVVDYLPSPL (275 aa). Residues 17-24, 81-85, and 135-138 contribute to the GTP site; these read AHIDAGKT, DTPGH, and NKMD.

Belongs to the TRAFAC class translation factor GTPase superfamily. Classic translation factor GTPase family. EF-G/EF-2 subfamily.

The protein localises to the cytoplasm. Its function is as follows. Catalyzes the GTP-dependent ribosomal translocation step during translation elongation. During this step, the ribosome changes from the pre-translocational (PRE) to the post-translocational (POST) state as the newly formed A-site-bound peptidyl-tRNA and P-site-bound deacylated tRNA move to the P and E sites, respectively. Catalyzes the coordinated movement of the two tRNA molecules, the mRNA and conformational changes in the ribosome. The polypeptide is Elongation factor G (Mesoplasma florum (strain ATCC 33453 / NBRC 100688 / NCTC 11704 / L1) (Acholeplasma florum)).